We begin with the raw amino-acid sequence, 262 residues long: 3-deoxy-manno-octulosonate cytidylyltransferase (262 aa).

This sequence belongs to the KdsB family.

Its subcellular location is the cytoplasm. The enzyme catalyses 3-deoxy-alpha-D-manno-oct-2-ulosonate + CTP = CMP-3-deoxy-beta-D-manno-octulosonate + diphosphate. It participates in nucleotide-sugar biosynthesis; CMP-3-deoxy-D-manno-octulosonate biosynthesis; CMP-3-deoxy-D-manno-octulosonate from 3-deoxy-D-manno-octulosonate and CTP: step 1/1. Its pathway is bacterial outer membrane biogenesis; lipopolysaccharide biosynthesis. Its function is as follows. Activates KDO (a required 8-carbon sugar) for incorporation into bacterial lipopolysaccharide in Gram-negative bacteria. In Koribacter versatilis (strain Ellin345), this protein is 3-deoxy-manno-octulosonate cytidylyltransferase.